The chain runs to 507 residues: ATP synthase subunit alpha, chloroplastic (507 aa).

170–177 (GDRQTGKT) contacts ATP. Thr257 carries the post-translational modification Phosphothreonine.

It belongs to the ATPase alpha/beta chains family. As to quaternary structure, F-type ATPases have 2 components, CF(1) - the catalytic core - and CF(0) - the membrane proton channel. CF(1) has five subunits: alpha(3), beta(3), gamma(1), delta(1), epsilon(1). CF(0) has four main subunits: a, b, b' and c.

It is found in the plastid. Its subcellular location is the chloroplast thylakoid membrane. The enzyme catalyses ATP + H2O + 4 H(+)(in) = ADP + phosphate + 5 H(+)(out). Produces ATP from ADP in the presence of a proton gradient across the membrane. The alpha chain is a regulatory subunit. In Capsella bursa-pastoris (Shepherd's purse), this protein is ATP synthase subunit alpha, chloroplastic.